Consider the following 305-residue polypeptide: Glutaminase (305 aa).

Residues Ser-61, Asn-113, Glu-158, Asn-165, Tyr-189, Tyr-241, and Val-259 each contribute to the substrate site.

Belongs to the glutaminase family. Homotetramer.

The enzyme catalyses L-glutamine + H2O = L-glutamate + NH4(+). The polypeptide is Glutaminase (Alkaliphilus oremlandii (strain OhILAs) (Clostridium oremlandii (strain OhILAs))).